Consider the following 519-residue polypeptide: Spermidine/putrescine import ATP-binding protein PotA (519 aa).

Positions 6 to 401 (LHLRDITKIY…PNSLWVANFI (396 aa)) constitute an ABC transporter domain. An ATP-binding site is contributed by 39-46 (GPSGCGKT). The interval 107 to 270 (RKPKDNVDQS…EQFENKNITR (164 aa)) is insert.

Belongs to the ABC transporter superfamily. Spermidine/putrescine importer (TC 3.A.1.11.1) family. The complex is composed of two ATP-binding proteins (PotA), two transmembrane proteins (PotB and PotC) and a solute-binding protein (PotD).

The protein localises to the cell membrane. The catalysed reaction is ATP + H2O + polyamine-[polyamine-binding protein]Side 1 = ADP + phosphate + polyamineSide 2 + [polyamine-binding protein]Side 1.. Its function is as follows. Part of the ABC transporter complex PotABCD involved in spermidine/putrescine import. Responsible for energy coupling to the transport system. This Ureaplasma parvum serovar 3 (strain ATCC 700970) protein is Spermidine/putrescine import ATP-binding protein PotA.